The chain runs to 600 residues: Alanine--tRNA ligase (600 aa).

The Zn(2+) site is built by H463, H467, C565, and H569.

The protein belongs to the class-II aminoacyl-tRNA synthetase family. It depends on Zn(2+) as a cofactor.

The protein localises to the cytoplasm. It carries out the reaction tRNA(Ala) + L-alanine + ATP = L-alanyl-tRNA(Ala) + AMP + diphosphate. Catalyzes the attachment of alanine to tRNA(Ala) in a two-step reaction: alanine is first activated by ATP to form Ala-AMP and then transferred to the acceptor end of tRNA(Ala). Also edits incorrectly charged Ser-tRNA(Ala) and Gly-tRNA(Ala) via its editing domain. In Treponema denticola (strain ATCC 35405 / DSM 14222 / CIP 103919 / JCM 8153 / KCTC 15104), this protein is Alanine--tRNA ligase (alaS).